A 512-amino-acid polypeptide reads, in one-letter code: 2,3-bisphosphoglycerate-independent phosphoglycerate mutase (512 aa).

Residues Asp11 and Ser61 each coordinate Mn(2+). Ser61 acts as the Phosphoserine intermediate in catalysis. Substrate contacts are provided by residues His122, 152 to 153 (RD), Arg184, Arg190, 259 to 262 (RADR), and Lys332. Mn(2+) is bound by residues Asp399, His403, Asp440, His441, and His459.

Belongs to the BPG-independent phosphoglycerate mutase family. Monomer. Mn(2+) is required as a cofactor.

It carries out the reaction (2R)-2-phosphoglycerate = (2R)-3-phosphoglycerate. It participates in carbohydrate degradation; glycolysis; pyruvate from D-glyceraldehyde 3-phosphate: step 3/5. Its function is as follows. Catalyzes the interconversion of 2-phosphoglycerate and 3-phosphoglycerate. The protein is 2,3-bisphosphoglycerate-independent phosphoglycerate mutase of Francisella tularensis subsp. tularensis (strain FSC 198).